The chain runs to 384 residues: DNA dC-&gt;dU-editing enzyme APOBEC-3G (384 aa).

The interval 1-60 is essential for cytoplasmic localization; the sequence is MTPQFRNTVERMYRDTFSYNFNNRPILSRRNTVWLCYEVKTKDPSRPPLDAKIFRGQVYS. 2 consecutive CMP/dCMP-type deaminase domains span residues 29–138 and 214–328; these read RRNT…LRSL and GRHE…LRTL. T32 carries the post-translational modification Phosphothreonine; by PKA. Residues H65, C97, and C100 each contribute to the Zn(2+) site. The tract at residues 209-336 is necessary for homooligomerization; sequence EHWVRGRHET…TLAEAGAKIS (128 aa). The segment at 213–215 is interaction with DNA; it reads RGR. T218 bears the Phosphothreonine; by PKA and CAMK2 mark. A Zn(2+)-binding site is contributed by H257. E259 serves as the catalytic Proton donor. Zn(2+) is bound by residues C288 and C291. An interaction with DNA region spans residues 313–320; sequence RIYDDQGR.

Belongs to the cytidine and deoxycytidylate deaminase family. Homodimer. Homooligomer. Can bind RNA to form ribonucleoprotein complexes of high-molecular-mass (HMM) or low-molecular-mass (LMM). HMM is inactive and heterogeneous in protein composition because of binding nonselectively to cellular RNAs, which in turn are associated with variety of cellular proteins. The LMM form which is enzymatically active has few or no RNAs associated. Its ability to form homooligomer is distinct from its ability to assemble into HMM. Interacts with APOBEC3B, APOBEC3F, MOV10, AGO2, EIF4E, EIF4ENIF1, DCP2 and DDX6 in an RNA-dependent manner. Interacts with AGO1, AGO3 and PKA/PRKACA. Zn(2+) is required as a cofactor.

The protein localises to the cytoplasm. It is found in the nucleus. Its subcellular location is the P-body. The enzyme catalyses a 2'-deoxycytidine in single-stranded DNA + H2O + H(+) = a 2'-deoxyuridine in single-stranded DNA + NH4(+). Functionally, DNA deaminase (cytidine deaminase) which acts as an inhibitor of retrovirus replication and retrotransposon mobility. After the penetration of retroviral nucleocapsids into target cells of infection and the initiation of reverse transcription, it can induce the conversion of cytosine to uracil in the minus-sense single-strand viral DNA, leading to G-to-A hypermutations in the subsequent plus-strand viral DNA. The resultant detrimental levels of mutations in the proviral genome, along with a deamination-independent mechanism that works prior to the proviral integration, together exert efficient antiretroviral effects in infected target cells. Selectively targets single-stranded DNA and does not deaminate double-stranded DNA or single- or double-stranded RNA. The polypeptide is DNA dC-&gt;dU-editing enzyme APOBEC-3G (APOBEC3G) (Gorilla gorilla gorilla (Western lowland gorilla)).